A 297-amino-acid chain; its full sequence is Aspartate carbamoyltransferase catalytic subunit (297 aa).

Carbamoyl phosphate-binding residues include Arg51 and Thr52. Residue Lys79 coordinates L-aspartate. Positions 101, 130, and 133 each coordinate carbamoyl phosphate. The L-aspartate site is built by Arg163 and Arg215. The carbamoyl phosphate site is built by Gly256 and Pro257.

The protein belongs to the aspartate/ornithine carbamoyltransferase superfamily. ATCase family. Heterododecamer (2C3:3R2) of six catalytic PyrB chains organized as two trimers (C3), and six regulatory PyrI chains organized as three dimers (R2).

It carries out the reaction carbamoyl phosphate + L-aspartate = N-carbamoyl-L-aspartate + phosphate + H(+). Its pathway is pyrimidine metabolism; UMP biosynthesis via de novo pathway; (S)-dihydroorotate from bicarbonate: step 2/3. In terms of biological role, catalyzes the condensation of carbamoyl phosphate and aspartate to form carbamoyl aspartate and inorganic phosphate, the committed step in the de novo pyrimidine nucleotide biosynthesis pathway. This chain is Aspartate carbamoyltransferase catalytic subunit, found in Ehrlichia ruminantium (strain Gardel).